Consider the following 463-residue polypeptide: Glutamate--tRNA ligase (463 aa).

The 'HIGH' region motif lies at 8 to 18 (PSPTGYLHIGG). Residues 236–240 (RLSKR) carry the 'KMSKS' region motif. Lysine 239 contributes to the ATP binding site.

This sequence belongs to the class-I aminoacyl-tRNA synthetase family. Glutamate--tRNA ligase type 1 subfamily. As to quaternary structure, monomer.

The protein resides in the cytoplasm. The catalysed reaction is tRNA(Glu) + L-glutamate + ATP = L-glutamyl-tRNA(Glu) + AMP + diphosphate. In terms of biological role, catalyzes the attachment of glutamate to tRNA(Glu) in a two-step reaction: glutamate is first activated by ATP to form Glu-AMP and then transferred to the acceptor end of tRNA(Glu). The polypeptide is Glutamate--tRNA ligase (Nitrosomonas europaea (strain ATCC 19718 / CIP 103999 / KCTC 2705 / NBRC 14298)).